A 254-amino-acid polypeptide reads, in one-letter code: Peptide methionine sulfoxide reductase A5 (254 aa).

Positions 1-26 (MARGSAAAAIAGVVWVLLLLVGVASG) are cleaved as a signal peptide.

This sequence belongs to the MsrA Met sulfoxide reductase family.

The enzyme catalyses L-methionyl-[protein] + [thioredoxin]-disulfide + H2O = L-methionyl-(S)-S-oxide-[protein] + [thioredoxin]-dithiol. The catalysed reaction is [thioredoxin]-disulfide + L-methionine + H2O = L-methionine (S)-S-oxide + [thioredoxin]-dithiol. Functionally, catalyzes the reduction of methionine sulfoxide (MetSO) to methionine in proteins. Plays a protective role against oxidative stress by restoring activity to proteins that have been inactivated by methionine oxidation. MSRA family specifically reduces the MetSO S-enantiomer. In Oryza sativa subsp. japonica (Rice), this protein is Peptide methionine sulfoxide reductase A5 (MSRA5).